A 287-amino-acid polypeptide reads, in one-letter code: tRNA selenocysteine 1-associated protein 1 (287 aa).

RRM domains are found at residues 3–86 and 96–175; these read ASLW…YATY and YSLF…VAIP.

This sequence belongs to the RRM TRSPAP family. Component of the tRNA(Sec) complex composed at least of EEFSEC, SECISBP2, SEPHS1, SEPSECS, TRNAU1AP and tRNA(Sec). Associates with mRNP and/or polysomes. Found in a complex with tRNA(Sec). Interacts with SEPSECS. Ubiquitous.

It is found in the nucleus. Its subcellular location is the cytoplasm. Involved in the early steps of selenocysteine biosynthesis and tRNA(Sec) charging to the later steps resulting in the cotranslational incorporation of selenocysteine into selenoproteins. Stabilizes the SECISBP2, EEFSEC and tRNA(Sec) complex. May be involved in the methylation of tRNA(Sec). Enhances efficiency of selenoproteins synthesis. The protein is tRNA selenocysteine 1-associated protein 1 (Trnau1ap) of Rattus norvegicus (Rat).